We begin with the raw amino-acid sequence, 838 residues long: DNA gyrase subunit A (838 aa).

Positions Leu41–Leu510 constitute a Topo IIA-type catalytic domain. Residue Tyr129 is the O-(5'-phospho-DNA)-tyrosine intermediate of the active site. The GyrA-box motif lies at Gln537 to Gly543.

This sequence belongs to the type II topoisomerase GyrA/ParC subunit family. As to quaternary structure, heterotetramer, composed of two GyrA and two GyrB chains. In the heterotetramer, GyrA contains the active site tyrosine that forms a transient covalent intermediate with DNA, while GyrB binds cofactors and catalyzes ATP hydrolysis. It depends on Mg(2+) as a cofactor.

The protein resides in the cytoplasm. The enzyme catalyses ATP-dependent breakage, passage and rejoining of double-stranded DNA.. Its activity is regulated as follows. DNA supercoiling is inhibited by EDTA, novobiocin, coumermycin and ciprofloxacin. Functionally, a type II topoisomerase that negatively supercoils closed circular double-stranded (ds) DNA in an ATP-dependent manner to modulate DNA topology and maintain chromosomes in an underwound state. Also catalyzes the interconversion of other topological isomers of double-stranded DNA rings, including catenanes and knotted rings. Relaxes negatively supercoiled DNA in an ATP-independent manner. A linear reaction intermediate can be trapped in the presence of the antibiotic ciprofloxacin. Negative supercoiling favors strand separation, and DNA replication, transcription, recombination and repair, all of which involve strand separation. Type II topoisomerases break and join 2 DNA strands simultaneously in an ATP-dependent manner. The polypeptide is DNA gyrase subunit A (Mycobacterium bovis (strain BCG / Pasteur 1173P2)).